A 104-amino-acid polypeptide reads, in one-letter code: Protein RnfH (104 aa).

This sequence belongs to the UPF0125 (RnfH) family.

This Pseudomonas syringae pv. syringae (strain B728a) protein is Protein RnfH.